A 110-amino-acid chain; its full sequence is Large ribosomal subunit protein uL22 (110 aa).

This sequence belongs to the universal ribosomal protein uL22 family. In terms of assembly, part of the 50S ribosomal subunit.

Functionally, this protein binds specifically to 23S rRNA; its binding is stimulated by other ribosomal proteins, e.g. L4, L17, and L20. It is important during the early stages of 50S assembly. It makes multiple contacts with different domains of the 23S rRNA in the assembled 50S subunit and ribosome. The globular domain of the protein is located near the polypeptide exit tunnel on the outside of the subunit, while an extended beta-hairpin is found that lines the wall of the exit tunnel in the center of the 70S ribosome. This chain is Large ribosomal subunit protein uL22, found in Salmonella arizonae (strain ATCC BAA-731 / CDC346-86 / RSK2980).